Here is a 558-residue protein sequence, read N- to C-terminus: Rhamnogalacturonase B (558 aa).

An N-terminal signal peptide occupies residues 1–21; that stretch reads MLLDKLSVLSFLGLAPIFAAA. Cysteines 42 and 68 form a disulfide. N-linked (GlcNAc...) asparagine glycosylation is present at asparagine 145. Catalysis depends on aspartate 219, which acts as the Proton donor. Cysteine 221 and cysteine 238 are oxidised to a cystine. Asparagine 239 and asparagine 254 each carry an N-linked (GlcNAc...) asparagine glycan. Histidine 294 is a catalytic residue. Asparagine 321 is a glycosylation site (N-linked (GlcNAc...) asparagine). Cystine bridges form between cysteine 344-cysteine 350 and cysteine 372-cysteine 381. Positions 503-526 are enriched in low complexity; it reads VGAQEGSTTSAPSFAAPSGAGNSP. Residues 503-558 form a disordered region; it reads VGAQEGSTTSAPSFAAPSGAGNSPQGPTGASGFGEKGQQGEQGEQGEQGEQGVCYV.

Belongs to the glycosyl hydrolase 28 family.

It is found in the secreted. It catalyses the reaction Endohydrolysis of alpha-D-GalA-(1-&gt;2)-alpha-L-Rha glycosidic bond in the rhamnogalacturonan I backbone with initial inversion of anomeric configuration releasing oligosaccharides with beta-D-GalA at the reducing end.. Functionally, pectinolytic enzymes consist of four classes of enzymes: pectine lyase, polygalacturonase, pectin methylesterase and rhamnogalacturonase. Hydrolyzes alpha-D-galacturonopyranosyl-(1,2)-alpha-L-rhamnopyranosyl linkages in the backbone of the hairy regions of pectins. The protein is Rhamnogalacturonase B (rhgB) of Aspergillus niger.